The sequence spans 351 residues: ATP-dependent 6-phosphofructokinase subunit gamma (351 aa).

In terms of assembly, heterododecamer of 4 alpha, 4 beta and 4 gamma chains. The gamma chain bridges the N-terminal halves of the alpha and beta subunits.

The protein localises to the cytoplasm. It participates in carbohydrate degradation; glycolysis; D-glyceraldehyde 3-phosphate and glycerone phosphate from D-glucose: step 3/4. Structural subunit of pyrophosphate--fructose 6-phosphate 1-phosphotransferase. Not required for catalytic activity. Fine-tunes allosteric regulation of the ATP-PFK by ATP, fructose 2,6-bisphosphate and AMP. The protein is ATP-dependent 6-phosphofructokinase subunit gamma (PFK3) of Komagataella phaffii (strain GS115 / ATCC 20864) (Yeast).